Here is a 383-residue protein sequence, read N- to C-terminus: ATP phosphoribosyltransferase regulatory subunit (383 aa).

This sequence belongs to the class-II aminoacyl-tRNA synthetase family. HisZ subfamily. In terms of assembly, heteromultimer composed of HisG and HisZ subunits.

It localises to the cytoplasm. The protein operates within amino-acid biosynthesis; L-histidine biosynthesis; L-histidine from 5-phospho-alpha-D-ribose 1-diphosphate: step 1/9. Required for the first step of histidine biosynthesis. May allow the feedback regulation of ATP phosphoribosyltransferase activity by histidine. The protein is ATP phosphoribosyltransferase regulatory subunit of Desulfitobacterium hafniense (strain DSM 10664 / DCB-2).